Reading from the N-terminus, the 363-residue chain is NAD(P)H-quinone oxidoreductase subunit 1, chloroplastic (363 aa).

The next 6 membrane-spanning stretches (helical) occupy residues 28-48 (WVLVPILTTVLGITIGVLVIV), 98-118 (FSIGPSIAVISILLSYSVIPF), 127-147 (LPIGVFLWIAISSVAPIGLLM), 248-268 (YSGIKFGLFYVASYLNLLVSS), 300-320 (VFGMTISIFITLAKTYLFLFI), and 343-363 (FLLPISLGNLLLTTSFQLFSL).

It belongs to the complex I subunit 1 family. As to quaternary structure, NDH is composed of at least 16 different subunits, 5 of which are encoded in the nucleus.

It is found in the plastid. Its subcellular location is the chloroplast thylakoid membrane. The enzyme catalyses a plastoquinone + NADH + (n+1) H(+)(in) = a plastoquinol + NAD(+) + n H(+)(out). The catalysed reaction is a plastoquinone + NADPH + (n+1) H(+)(in) = a plastoquinol + NADP(+) + n H(+)(out). NDH shuttles electrons from NAD(P)H:plastoquinone, via FMN and iron-sulfur (Fe-S) centers, to quinones in the photosynthetic chain and possibly in a chloroplast respiratory chain. The immediate electron acceptor for the enzyme in this species is believed to be plastoquinone. Couples the redox reaction to proton translocation, and thus conserves the redox energy in a proton gradient. This Cucumis sativus (Cucumber) protein is NAD(P)H-quinone oxidoreductase subunit 1, chloroplastic.